A 153-amino-acid chain; its full sequence is UPF0756 membrane protein lwe1581 (153 aa).

A run of 4 helical transmembrane segments spans residues 6 to 26 (MLFLLLFLLLGLIAKNNSLII), 54 to 74 (WGVTIITVAILIPIATGQIGF), 80 to 100 (SFKSAAGWIGLGAGIAVSILA), and 117 to 137 (LVFGTILAVVLFRGIAAGPVI).

This sequence belongs to the UPF0756 family.

The protein localises to the cell membrane. This is UPF0756 membrane protein lwe1581 from Listeria welshimeri serovar 6b (strain ATCC 35897 / DSM 20650 / CCUG 15529 / CIP 8149 / NCTC 11857 / SLCC 5334 / V8).